We begin with the raw amino-acid sequence, 268 residues long: Tropinone reductase homolog At2g29170 (268 aa).

An NADP(+)-binding site is contributed by 22–46; it reads LVTGGSKGLGEAVVEELAMLGARVH. Serine 155 is a substrate binding site. Catalysis depends on tyrosine 168, which acts as the Proton acceptor.

Belongs to the short-chain dehydrogenases/reductases (SDR) family. SDR65C subfamily.

The polypeptide is Tropinone reductase homolog At2g29170 (Arabidopsis thaliana (Mouse-ear cress)).